Consider the following 81-residue polypeptide: Saposin-C (81 aa).

The Saposin B-type domain occupies 1 to 81; sequence ESVTCKACEY…CSELGLCMSG (81 aa). 3 disulfide bridges follow: cysteine 5–cysteine 78, cysteine 8–cysteine 72, and cysteine 36–cysteine 47. N-linked (GlcNAc...) asparagine glycosylation occurs at asparagine 22.

Its function is as follows. Saposin-A and saposin-C stimulate the hydrolysis of glucosylceramide by beta-glucosylceramidase (EC 3.2.1.45) and galactosylceramide by beta-galactosylceramidase (EC 3.2.1.46). Saposin-C apparently acts by combining with the enzyme and acidic lipid to form an activated complex, rather than by solubilizing the substrate. This is Saposin-C (PSAP) from Cavia porcellus (Guinea pig).